The following is a 280-amino-acid chain: MASGKKKTSRKPKNRSVKNEKLASFIKDFDSQVKIITEEMKASVVNILKEVDSQYNIEIIKLPMAIREMCWLDYIAKGGSQKALEAAATVKVDMEEITSTVTKTPFKADKKVKKGKCKPDDETVELNPLKSVIRTKTKAKVAAKKPSTARRTRASVGNVANTSKRTSKRGRATPSASKQAETSLLGYTPAATPRIDTSIFKTPALRTPCMQEPVYTFSANGSPLAGMDELFINVPARDGKIIRLLASEVDGLDINRLDQQAFENIKLLSSRLERLCKKLK.

The segment covering 140 to 153 (KVAAKKPSTARRTR) has biased composition (basic residues). The segment at 140-187 (KVAAKKPSTARRTRASVGNVANTSKRTSKRGRATPSASKQAETSLLGY) is disordered.

The protein belongs to the borealin family. As to quaternary structure, component of the CPC at least composed of survivin/birc5, incenp, cdca8/borealin and/or cdca9/dasra-A, and aurkb/aurora-B. Interacts with incenp (via N-terminus).

Its subcellular location is the nucleus. It localises to the chromosome. The protein localises to the centromere. It is found in the cytoplasm. The protein resides in the cytoskeleton. Its subcellular location is the spindle. Its function is as follows. Component of the chromosomal passenger complex (CPC), a complex that acts as a key regulator of mitosis. The CPC complex has essential functions at the centromere in ensuring correct chromosome alignment and segregation and is required for chromatin-induced microtubule stabilization and spindle assembly. Contributes to CPC function by facilitating loading of the CPC onto chromosomes. This is Borealin (cdca8) from Xenopus laevis (African clawed frog).